A 228-amino-acid chain; its full sequence is uncharacterized protein (228 aa).

The tRNA-binding domain maps to 99–207; the sequence is LANKVPFVVC…PKIKVGKPFI (109 aa).

This is an uncharacterized protein from Mycoplasma genitalium (strain ATCC 33530 / DSM 19775 / NCTC 10195 / G37) (Mycoplasmoides genitalium).